Reading from the N-terminus, the 399-residue chain is uncharacterized protein (399 aa).

A run of 10 helical transmembrane segments spans residues phenylalanine 7–isoleucine 27, phenylalanine 33–proline 53, alanine 79–leucine 99, leucine 131–isoleucine 151, phenylalanine 153–isoleucine 173, valine 208–tyrosine 228, serine 242–isoleucine 262, proline 296–valine 316, leucine 335–serine 355, and alanine 357–leucine 377.

The protein belongs to the major facilitator superfamily. Drug:H(+) antiporter-3 (DHA3) (TC 2.A.1.21) family.

It localises to the cell membrane. This is an uncharacterized protein from Bacillus subtilis (strain 168).